Consider the following 303-residue polypeptide: Phosphate import ATP-binding protein PstB (303 aa).

Positions 56-298 (LSTSDVHVYY…PDHQLTEAYI (243 aa)) constitute an ABC transporter domain. Residue 88–95 (GPSGCGKS) participates in ATP binding.

This sequence belongs to the ABC transporter superfamily. Phosphate importer (TC 3.A.1.7) family. As to quaternary structure, the complex is composed of two ATP-binding proteins (PstB), two transmembrane proteins (PstC and PstA) and a solute-binding protein (PstS).

It is found in the cell inner membrane. It carries out the reaction phosphate(out) + ATP + H2O = ADP + 2 phosphate(in) + H(+). Its function is as follows. Part of the ABC transporter complex PstSACB involved in phosphate import. Responsible for energy coupling to the transport system. The protein is Phosphate import ATP-binding protein PstB of Acinetobacter baylyi (strain ATCC 33305 / BD413 / ADP1).